Consider the following 233-residue polypeptide: 2,3,4,5-tetrahydropyridine-2,6-dicarboxylate N-acetyltransferase (233 aa).

This sequence belongs to the transferase hexapeptide repeat family. DapH subfamily.

The catalysed reaction is (S)-2,3,4,5-tetrahydrodipicolinate + acetyl-CoA + H2O = L-2-acetamido-6-oxoheptanedioate + CoA. It participates in amino-acid biosynthesis; L-lysine biosynthesis via DAP pathway; LL-2,6-diaminopimelate from (S)-tetrahydrodipicolinate (acetylase route): step 1/3. Its function is as follows. Catalyzes the transfer of an acetyl group from acetyl-CoA to tetrahydrodipicolinate. This Thermotoga petrophila (strain ATCC BAA-488 / DSM 13995 / JCM 10881 / RKU-1) protein is 2,3,4,5-tetrahydropyridine-2,6-dicarboxylate N-acetyltransferase.